The following is a 257-amino-acid chain: Phosphate import ATP-binding protein PstB (257 aa).

In terms of domain architecture, ABC transporter spans 11–252 (LEVRDLNFFY…PQKKATEDYI (242 aa)). 43–50 (GPSGCGKS) is an ATP binding site.

It belongs to the ABC transporter superfamily. Phosphate importer (TC 3.A.1.7) family. In terms of assembly, the complex is composed of two ATP-binding proteins (PstB), two transmembrane proteins (PstC and PstA) and a solute-binding protein (PstS).

The protein resides in the cell inner membrane. It carries out the reaction phosphate(out) + ATP + H2O = ADP + 2 phosphate(in) + H(+). In terms of biological role, part of the ABC transporter complex PstSACB involved in phosphate import. Responsible for energy coupling to the transport system. The protein is Phosphate import ATP-binding protein PstB of Chromobacterium violaceum (strain ATCC 12472 / DSM 30191 / JCM 1249 / CCUG 213 / NBRC 12614 / NCIMB 9131 / NCTC 9757 / MK).